We begin with the raw amino-acid sequence, 163 residues long: uncharacterized protein (163 aa).

4 helical membrane-spanning segments follow: residues 19 to 39 (GPPS…SEGI), 63 to 83 (FFAD…LLGL), 87 to 107 (VAAV…KLRA), and 119 to 139 (FWGM…LIFL).

It belongs to the DoxX family.

It localises to the cell membrane. This is an uncharacterized protein from Mycobacterium tuberculosis (strain ATCC 25618 / H37Rv).